A 465-amino-acid polypeptide reads, in one-letter code: MNVTSLFSFTSPAVKRLLGWKQGDEEEKWAEKAVDALVKKLKKKKGAMEELEKALSCPGQPSNCVTIPRSLDGRLQVSHRKGLPHVIYCRVWRWPDLQSHHELKPLECCEFPFGSKQKEVCINPYHYKRVESPVLPPVLVPRHSEYNPQHSLLAQFRNLGQNEPHMPHNATFPDSFQQPNSHPFPHSPNSSYPNSPGSSSSTYPHSPASSDPGSPFQMPADTPPPAYLPPEDQMTHDTSQPMDTNMMAPGIHPDIHRGDVQAVAYEEPKHWCSIVYYELNNRVGEAFHASSTSILVDGFTDPSNNKNRFCLGLLSNVNRNSTIENTRRHIGKGVHLYYVGGEVYAECLSDSSIFVQSRNCNYHHGFHPTTVCKIPSGCSLKIFNNQEFAQLLAQSVNHGFETVYELTKMCTLRMSFVKGWGAEYHRQDVTSTPCWIEIHLHGPLQWLDKVLTQMGSPHNPISSVS.

An MH1 domain is found at 12–136 (PAVKRLLGWK…YKRVESPVLP (125 aa)). Positions 64, 109, 121, and 126 each coordinate Zn(2+). Residues 161–240 (QNEPHMPHNA…EDQMTHDTSQ (80 aa)) form a disordered region. The span at 179–210 (PNSHPFPHSPNSSYPNSPGSSSSTYPHSPASS) shows a compositional bias: low complexity. In terms of domain architecture, MH2 spans 271-465 (WCSIVYYELN…SPHNPISSVS (195 aa)). Phosphoserine occurs at positions 463 and 465.

The protein belongs to the dwarfin/SMAD family. In terms of assembly, found in a complex with SMAD4 and YY1. Interacts with HGS, NANOG and ZCCHC12. Upon C-terminus phosphorylation: forms trimers with another SMAD1 and the co-SMAD SMAD4. Interacts with PEBP2-alpha subunit, CREB-binding protein (CBP), p300, SMURF1, SMURF2, USP15 and HOXC8. Associates with ZNF423 or ZNF521 in response to BMP2 leading to activate transcription of BMP target genes. Interacts with SKOR1. Interacts (via MH2 domain) with LEMD3. Binding to LEMD3 results in at least a partial reduction of receptor-mediated phosphorylation. Forms a ternary complex with PSMB4 and OAZ1 before PSMB4 is incorporated into the 20S proteasome. Found in a macromolecular complex with FAM83G. Interacts (via MH2 domain) with FAM83G (via MH2 domain); in a SMAD4-independent manner. Interacts with ZC3H3. Interacts with TMEM119. Interacts (via MH1 and MH2 domains) with ZNF8. Interacts with RANBP3L; the interaction increases when SMAD1 is not phosphorylated and mediates SMAD1 nuclear export. Interacts with EGR1; this interaction inhibits SMAD1 dephosphorylation. Interacts with SMAD6. Interacts with YAP1. Post-translationally, phosphorylation of the C-terminal SVS motif by BMP type 1 receptor kinase activates SMAD1 by promoting dissociation from the receptor and trimerization with SMAD4. Phosphorylation by ERK2 MAP kinase in response to EGF or HGF prevents SMAD1 nuclear accumulation and transcriptional activity in response to BMP. Dephosphorylation, probably by PPM1A, induces its export from the nucleus to the cytoplasm. Dephosphorylation is inhibited by association with EGR1. Phosphorylation by CDK8/9 creates binding sites for YAP1, and subsequent phosphorylation by GSK3 switches off YAP1 binding and adds binding sites for SMURF1. Ubiquitinated by SMAD-specific E3 ubiquitin ligase SMURF1, leading to its degradation. Monoubiquitinated, leading to prevent DNA-binding. Deubiquitination by USP15 alleviates inhibition and promotes activation of TGF-beta target genes. Dephosphorylation, probably by PPM1A, induces its export from the nucleus to the cytoplasm. Phospho-SMAD1 is ubiquitinated by CHIP leading to disruption of the SMAD1-SMAD4 complex.

The protein localises to the cytoplasm. Its subcellular location is the nucleus. Its function is as follows. Transcriptional modulator that plays a role in various cellular processes, including embryonic development, cell differentiation, and tissue homeostasis. Upon BMP ligand binding to their receptors at the cell surface, is phosphorylated by activated type I BMP receptors (BMPRIs) and associates with SMAD4 to form an heteromeric complex which translocates into the nucleus acting as transcription factor. In turn, the hetero-trimeric complex recognizes cis-regulatory elements containing Smad Binding Elements (SBEs) to modulate the outcome of the signaling network. SMAD1/OAZ1/PSMB4 complex mediates the degradation of the CREBBP/EP300 repressor SNIP1. This is Mothers against decapentaplegic homolog 1 (SMAD1) from Coturnix japonica (Japanese quail).